Reading from the N-terminus, the 111-residue chain is Cytochrome c (111 aa).

N-acetylalanine is present on alanine 1. 3 residues coordinate heme c: cysteine 22, cysteine 25, and histidine 26. N6,N6,N6-trimethyllysine is present on lysine 80. Methionine 88 lines the heme c pocket. Lysine 94 carries the post-translational modification N6,N6,N6-trimethyllysine.

This sequence belongs to the cytochrome c family. Post-translationally, binds 1 heme c group covalently per subunit.

It localises to the mitochondrion intermembrane space. Functionally, electron carrier protein. The oxidized form of the cytochrome c heme group can accept an electron from the heme group of the cytochrome c1 subunit of cytochrome reductase. Cytochrome c then transfers this electron to the cytochrome oxidase complex, the final protein carrier in the mitochondrial electron-transport chain. The protein is Cytochrome c of Vigna radiata var. radiata (Mung bean).